Here is a 451-residue protein sequence, read N- to C-terminus: Probable beta-1,4-xylosyltransferase GT43E (451 aa).

At 1-88 the chain is on the cytoplasmic side; sequence MVSSRRNTGG…SKSRGLSCKR (88 aa). A helical; Signal-anchor for type II membrane protein membrane pass occupies residues 89–109; the sequence is LAFHLFVCFMVGIFIGFMPFF. The Lumenal portion of the chain corresponds to 110 to 451; sequence SVDVSQKIVS…KNLDAVIPVT (342 aa). Asn-260 and Asn-366 each carry an N-linked (GlcNAc...) asparagine glycan.

The protein belongs to the glycosyltransferase 43 family.

The protein localises to the golgi apparatus membrane. Probable beta-1,4-xylosyltransferase involved in xylan biosynthesis in cell walls. The chain is Probable beta-1,4-xylosyltransferase GT43E from Oryza sativa subsp. japonica (Rice).